The sequence spans 227 residues: tRNA (guanine-N(7)-)-methyltransferase (227 aa).

S-adenosyl-L-methionine-binding residues include E57, E82, D109, and D132. D132 is a catalytic residue. Substrate-binding positions include K136, D168, and T205–E208.

The protein belongs to the class I-like SAM-binding methyltransferase superfamily. TrmB family.

It catalyses the reaction guanosine(46) in tRNA + S-adenosyl-L-methionine = N(7)-methylguanosine(46) in tRNA + S-adenosyl-L-homocysteine. The protein operates within tRNA modification; N(7)-methylguanine-tRNA biosynthesis. In terms of biological role, catalyzes the formation of N(7)-methylguanine at position 46 (m7G46) in tRNA. The polypeptide is tRNA (guanine-N(7)-)-methyltransferase (Leifsonia xyli subsp. xyli (strain CTCB07)).